Here is a 352-residue protein sequence, read N- to C-terminus: C-glycoside deglycosidase alpha subunit (352 aa).

Mn(2+) is bound at residue Glu-147. The Proton acceptor role is filled by His-149. Mn(2+) is bound by residues Asp-179, His-269, and Glu-305.

The protein belongs to the C-glycoside deglycosidase alpha subunit family. As to quaternary structure, heterodimer composed of an alpha subunit (CarB2) and a beta subunit (CarC2). A divalent metal cation is required as a cofactor.

The catalysed reaction is 3''-dehydroorientin = 1,5-anhydro-D-erythro-hex-1-en-3-ulose + luteolin. Activity is strongly reduced in the presence of chelating agents. In terms of biological role, carbon-carbon bond-cleaving enzyme which participates in the metabolism of C-glycosides. Acts on the C8-glycosylated compound 3''-dehydroorientin (3''-oxo-orientin). This is C-glycoside deglycosidase alpha subunit from Arthrobacter globiformis (strain ATCC 8010 / DSM 20124 / JCM 1332 / NBRC 12137 / NCIMB 8907 / NRRL B-2979 / 168).